Reading from the N-terminus, the 156-residue chain is DNA mismatch endonuclease Vsr (156 aa).

Residues Asp-51 and Thr-63 each coordinate Mg(2+).

It belongs to the Vsr family. Mg(2+) is required as a cofactor. Zn(2+) serves as cofactor.

Its function is as follows. Deamination of 5-methylcytosine in DNA results in T/G mismatches. If unrepaired, these mismatches can lead to C-to-T transition mutations. The very short patch (VSP) repair process in E.coli counteracts the mutagenic process by repairing the mismatches in favor of the G-containing strand. This enzyme is an endonuclease that nicks double-stranded DNA within the sequence CT(AT)GN or NT(AT)GG next to the thymidine residue that is mismatched to 2'-deoxyguanosine. The incision is mismatch-dependent and strand-specific. The sequence is that of DNA mismatch endonuclease Vsr from Escherichia coli (strain K12).